A 260-amino-acid polypeptide reads, in one-letter code: 14-3-3-like protein C (260 aa).

It belongs to the 14-3-3 family.

The polypeptide is 14-3-3-like protein C (Nicotiana tabacum (Common tobacco)).